A 420-amino-acid polypeptide reads, in one-letter code: LanC-like protein 3 (420 aa).

The protein belongs to the LanC-like protein family.

The chain is LanC-like protein 3 (LANCL3) from Homo sapiens (Human).